A 205-amino-acid chain; its full sequence is Large ribosomal subunit protein uL4 (205 aa).

Residues Arg45–Tyr97 are disordered. The span at Gly60–Gly71 shows a compositional bias: basic residues.

It belongs to the universal ribosomal protein uL4 family. As to quaternary structure, part of the 50S ribosomal subunit.

One of the primary rRNA binding proteins, this protein initially binds near the 5'-end of the 23S rRNA. It is important during the early stages of 50S assembly. It makes multiple contacts with different domains of the 23S rRNA in the assembled 50S subunit and ribosome. Functionally, forms part of the polypeptide exit tunnel. The protein is Large ribosomal subunit protein uL4 of Lactobacillus johnsonii (strain CNCM I-12250 / La1 / NCC 533).